A 445-amino-acid chain; its full sequence is Proton extrusion protein PxcA (445 aa).

Helical transmembrane passes span 227 to 247 (FILL…TFLI), 322 to 342 (AIAN…VVAF), 369 to 389 (LIIL…WEVI), and 405 to 425 (FNFL…KYWI).

This sequence belongs to the CemA family.

It is found in the cell inner membrane. Required for H(+) efflux immediately after light irradiation to form a rapid H(+) concentration gradient across the thylakoid membranes. Together with PxcL, contributes to transient H(+) uptake following dark to light transition. The protein is Proton extrusion protein PxcA of Microcystis aeruginosa (strain NIES-843 / IAM M-2473).